A 147-amino-acid polypeptide reads, in one-letter code: MNVKKITSEQDLHTAFEIRKAVFVEEQGCPISDEFDEFDTLHGDCQHILAYHQNVPVGTARVRIVGHTGKLERICILKSYRKFGLGKVIVDALERIVKEQGISAFKLHGQTQAAGFYEKLGYRTASEEFMLDGIPHVLMTKQDDSAL.

In terms of domain architecture, N-acetyltransferase spans 1–144 (MNVKKITSEQ…PHVLMTKQDD (144 aa)). CoA-binding positions include 74–76 (ICI) and 115–117 (GFY).

Belongs to the UPF0039 (ElaA) family.

Could catalyze the transfer of an acetyl group from acetyl coenzyme A (AcCoA) to an acceptor substrate and release both CoA and the acetylated product. The chain is Putative acetyltransferase BSU40680 (yybD) from Bacillus subtilis (strain 168).